An 806-amino-acid chain; its full sequence is MATLQDIGVSALINLFGAFLFLIAFAVLRIQPINDRVYFPKWYLTGERNSPRRSDRTLVGKFVNLNYKTYFTFLNWMPQAMKMSESEIIRHAGLDSAIFLRIYTLGLKIFAPVMVLALVVLVPVNVSSGTLFFLKKELVVSNIDKLSISNVQPKSSKFFFHIAVEYIFTFWACFMLYREYNNVAIMRLQYLASQRRRPEQFTVVVRNVPDMPGHSVPDTVDQFFKTNHPEHYLCHQAVYNANTYAKLVKQRAKLQRWFDYYVLKHQRNPHKQPTCRTGFLGLWGKRVDSIEYYKQQIKEFDHNMSLERQKVLKDSKLMLPVAFVSFDSRWGAAVCAQTQQSKNPTLWLTSSAPEPRDIYWQNLAIPFISLTIRKLVIGVSVFALVFFYMIPIAFVQSLANLEGLDRVAPFLRPVTRLDFIKSFLQGFLPGLALKIFLWILPTVLLIMSKIEGYIALSTLERRAAAKYYYFMLVNVFLGSIIAGTAFEQLHSFLHQSPSQIPRTIGVSIPMKATFFITYIMVDGWAGIAGEILRLKPLVIFHLKNMFIVKTEEDRVRAMDPGFVDFKETIPSLQLYFLLGIVYTAVTPILLPFILIFFAFAYLVYRHQIINVYNQQYESCGAFWPHVHGRIIASLLISQLLLMGLLASKKAADSTPLLIILPILTLSFHKYCKHRFEPAFRQYPLEEAMAKDKLEKETEPELNMKADLADAYLHPIFHSFEKEVELSSSSSSEKETHQEETPEVRVDKHETQSSSPVTELGTSSHHHHVYNSTSPSSHYASAYEQSSSQYEYHYNTHQYEEHEYRYN.

A run of 10 helical transmembrane segments spans residues 7–27, 102–122, 157–177, 375–395, 427–447, 467–487, 512–532, 576–596, 626–646, and 650–670; these read IGVSALINLFGAFLFLIAFAV, IYTLGLKIFAPVMVLALVVLV, KFFFHIAVEYIFTFWACFMLY, LVIGVSVFALVFFYMIPIAFV, FLPGLALKIFLWILPTVLLIM, YYYFMLVNVFLGSIIAGTAFE, ATFFITYIMVDGWAGIAGEIL, FLLGIVYTAVTPILLPFILIF, VHGRIIASLLISQLLLMGLLA, and AADSTPLLIILPILTLSFHKY. Residues 726-786 are disordered; sequence SSSSSSEKET…HYASAYEQSS (61 aa). Positions 731–750 are enriched in basic and acidic residues; the sequence is SEKETHQEETPEVRVDKHET. Phosphothreonine is present on Thr735. Positions 751–762 are enriched in polar residues; it reads QSSSPVTELGTS. The segment covering 775–786 has biased composition (low complexity); it reads SSHYASAYEQSS.

It belongs to the CSC1 (TC 1.A.17) family.

It localises to the golgi apparatus membrane. It is found in the cell membrane. Functionally, acts as an osmosensitive calcium-permeable cation channel. The chain is Hyperosmolality-gated Ca2+ permeable channel 1.8 from Arabidopsis thaliana (Mouse-ear cress).